Here is a 152-residue protein sequence, read N- to C-terminus: FMN reductase (NADH) RutF (152 aa).

The protein belongs to the non-flavoprotein flavin reductase family. RutF subfamily.

The catalysed reaction is FMNH2 + NAD(+) = FMN + NADH + 2 H(+). Functionally, catalyzes the reduction of FMN to FMNH2 which is used to reduce pyrimidine by RutA via the Rut pathway. The protein is FMN reductase (NADH) RutF of Shigella dysenteriae serotype 1 (strain Sd197).